A 1217-amino-acid polypeptide reads, in one-letter code: Rho family-interacting cell polarization regulator 1 (1217 aa).

Phosphoserine is present on S22. Residues 83-112 adopt a coiled-coil conformation; the sequence is RGLTAYLEVHQQEQEKLQRQIKESKRNSRL. Residues S345 and S347 each carry the phosphoserine modification. T351 is modified (phosphothreonine). Positions 371 to 413 are disordered; the sequence is NGTAWSLSSESSDDSSSPQLSGTARYSSTPKPLVQQPEPLPVQ. Low complexity-rich tracts occupy residues 376-391 and 400-413; these read SLSS…PQLS and PKPL…LPVQ. A phosphoserine mark is found at S452 and S455. The disordered stretch occupies residues 565-762; that stretch reads TSTTVGSTHK…SPSSIVPEPQ (198 aa). Residues 579–594 are compositionally biased toward polar residues; that stretch reads PLTSTGSIPSVTDSIQ. The span at 595-649 shows a compositional bias: low complexity; sequence TTTSPTHTTPSPTHTTVSPTHSTPSPTHTTVSPSNAALSPSNATPSLSHSTTSPT. Polar residues predominate over residues 650–661; sequence QKATMSTHTTSA. Low complexity predominate over residues 664 to 695; it reads PVQTTTSPISTTVSPSPSVDTAIISSSSAVPS. Polar residues predominate over residues 720–729; that stretch reads ACTSSPSLAS. The residue at position 742 (S742) is a Phosphoserine. Residues 786-828 are a coiled coil; sequence RRLEEALRTLMAALDDYRGQFPELQGLEQEVTRLESLLMQRQG. The segment at 850–874 is disordered; the sequence is FLNDDEDEDNDSPGDRPTSSPEVVA. Over residues 852-861 the composition is skewed to acidic residues; it reads NDDEDEDNDS. Phosphoserine occurs at positions 868 and 869.

This sequence belongs to the RIPOR family. Interacts (via N-terminus) with RHOA (GTP-bound form); this interaction links active RHOA to STK24 and STK26 kinases. Interacts with RHOB. Interacts with RHOC. Interacts (via C-terminus) with PDCD10; this interaction occurs in a Rho-independent manner. Interacts (via C-terminus) with STK24; this interaction occurs in a PDCD10-dependent and Rho-independent manner. Interacts (via C-terminus) with STK26; this interaction occurs in a PDCD10-dependent and Rho-independent manner. Interacts (via N-terminus) with 14-3-3 proteins; these interactions occur in a Rho-dependent manner.

The protein resides in the cytoplasm. It localises to the golgi apparatus. Its function is as follows. Downstream effector protein for Rho-type small GTPases that plays a role in cell polarity and directional migration. Acts as an adapter protein, linking active Rho proteins to STK24 and STK26 kinases, and hence positively regulates Golgi reorientation in polarized cell migration upon Rho activation. Involved in the subcellular relocation of STK26 from the Golgi to cytoplasm punctae in a Rho- and PDCD10-dependent manner upon serum stimulation. This is Rho family-interacting cell polarization regulator 1 from Rattus norvegicus (Rat).